The chain runs to 156 residues: Small ribosomal subunit protein uS7 (156 aa).

Belongs to the universal ribosomal protein uS7 family. Part of the 30S ribosomal subunit. Contacts proteins S9 and S11.

Its function is as follows. One of the primary rRNA binding proteins, it binds directly to 16S rRNA where it nucleates assembly of the head domain of the 30S subunit. Is located at the subunit interface close to the decoding center, probably blocks exit of the E-site tRNA. This is Small ribosomal subunit protein uS7 from Desulfosudis oleivorans (strain DSM 6200 / JCM 39069 / Hxd3) (Desulfococcus oleovorans).